The following is a 950-amino-acid chain: Bifunctional glutamine synthetase adenylyltransferase/adenylyl-removing enzyme (950 aa).

The adenylyl removase stretch occupies residues 1–443; sequence MSLPSPLIPV…VFVTLIGDEE (443 aa). The adenylyl transferase stretch occupies residues 450–950; sequence ERHFNELWDM…WQEWLESSTI (501 aa).

This sequence belongs to the GlnE family. It depends on Mg(2+) as a cofactor.

The enzyme catalyses [glutamine synthetase]-O(4)-(5'-adenylyl)-L-tyrosine + phosphate = [glutamine synthetase]-L-tyrosine + ADP. The catalysed reaction is [glutamine synthetase]-L-tyrosine + ATP = [glutamine synthetase]-O(4)-(5'-adenylyl)-L-tyrosine + diphosphate. Involved in the regulation of glutamine synthetase GlnA, a key enzyme in the process to assimilate ammonia. When cellular nitrogen levels are high, the C-terminal adenylyl transferase (AT) inactivates GlnA by covalent transfer of an adenylyl group from ATP to specific tyrosine residue of GlnA, thus reducing its activity. Conversely, when nitrogen levels are low, the N-terminal adenylyl removase (AR) activates GlnA by removing the adenylyl group by phosphorolysis, increasing its activity. The regulatory region of GlnE binds the signal transduction protein PII (GlnB) which indicates the nitrogen status of the cell. This Vibrio vulnificus (strain CMCP6) protein is Bifunctional glutamine synthetase adenylyltransferase/adenylyl-removing enzyme.